Consider the following 648-residue polypeptide: Serine/threonine-protein kinase DCLK3 (648 aa).

Disordered stretches follow at residues 86–127 (DDRA…HLGV) and 150–345 (QSLE…PRPM). Composition is skewed to basic and acidic residues over residues 98 to 127 (GKWE…HLGV), 213 to 234 (ELRR…DQES), 255 to 266 (EGLREVKKDTRP), 277 to 303 (LREH…EKKP), and 312 to 338 (TLRD…ERPS). The region spanning 356 to 613 (YETGRVIGDG…AHQVLQHPWI (258 aa)) is the Protein kinase domain. ATP-binding positions include 362-370 (IGDGNFAVV) and lysine 385. The active-site Proton acceptor is aspartate 477. The disordered stretch occupies residues 628–648 (VSPSSEGHFRSQHKRVVEQVS).

The protein belongs to the protein kinase superfamily. CAMK Ser/Thr protein kinase family. CaMK subfamily.

The protein resides in the cytoplasm. It is found in the nucleus. It carries out the reaction L-seryl-[protein] + ATP = O-phospho-L-seryl-[protein] + ADP + H(+). The enzyme catalyses L-threonyl-[protein] + ATP = O-phospho-L-threonyl-[protein] + ADP + H(+). The polypeptide is Serine/threonine-protein kinase DCLK3 (DCLK3) (Homo sapiens (Human)).